The following is a 132-amino-acid chain: Small ribosomal subunit protein uS8 (132 aa).

Belongs to the universal ribosomal protein uS8 family. As to quaternary structure, part of the 30S ribosomal subunit. Contacts proteins S5 and S12.

In terms of biological role, one of the primary rRNA binding proteins, it binds directly to 16S rRNA central domain where it helps coordinate assembly of the platform of the 30S subunit. The polypeptide is Small ribosomal subunit protein uS8 (Bacillus cytotoxicus (strain DSM 22905 / CIP 110041 / 391-98 / NVH 391-98)).